The following is a 90-amino-acid chain: MMSKLGVLLTICLLLFPHTAVPLDGDQHADQPAERLQDDISSEHHPMLNSIRRREQNQFMSFTSVKLRDSRGERCCGPTACMAGCRPCCG.

The first 22 residues, 1-22 (MMSKLGVLLTICLLLFPHTAVP), serve as a signal peptide directing secretion. Positions 23 to 74 (LDGDQHADQPAERLQDDISSEHHPMLNSIRRREQNQFMSFTSVKLRDSRGER) are excised as a propeptide. Positions 24 to 43 (DGDQHADQPAERLQDDISSE) are disordered. Residues 25 to 43 (GDQHADQPAERLQDDISSE) are compositionally biased toward basic and acidic residues. Cystine bridges form between Cys-75–Cys-89, Cys-76–Cys-85, and Cys-81–Cys-88. Pro-87 bears the 4-hydroxyproline mark. Cys-89 is subject to Cysteine amide.

The protein belongs to the conotoxin M superfamily. As to expression, expressed by the venom duct.

It is found in the secreted. In Conus textile (Cloth-of-gold cone), this protein is Conotoxin TxMMSK-06.